We begin with the raw amino-acid sequence, 91 residues long: Large ribosomal subunit protein eL34 (91 aa).

Residues 48–71 (RGRPVEMRKLPKTKKRPERPYPHL) form a disordered region.

Belongs to the eukaryotic ribosomal protein eL34 family.

This Pyrococcus abyssi (strain GE5 / Orsay) protein is Large ribosomal subunit protein eL34 (rpl34e).